We begin with the raw amino-acid sequence, 199 residues long: MNEYIESCQQEKRTYDEEGVREAVRLFLKSIGEDPGREGLVETPDRIARACRELFAGLQASPADVLEKHFDVDTDELVLVKDIELYSVCEHHLLPFHGVAHVGYIPAKDGVMGLSKLARLVEVYARRPQVQERLTQQIADALVEYAGARGVIVVTECEHLCMSMRGIKKSSARTVTSAVRGLLRNPATRAEAMSLILDK.

Positions 89, 92, and 161 each coordinate Zn(2+).

This sequence belongs to the GTP cyclohydrolase I family. Homomer.

The enzyme catalyses GTP + H2O = 7,8-dihydroneopterin 3'-triphosphate + formate + H(+). It participates in cofactor biosynthesis; 7,8-dihydroneopterin triphosphate biosynthesis; 7,8-dihydroneopterin triphosphate from GTP: step 1/1. The polypeptide is GTP cyclohydrolase 1 (Bifidobacterium longum (strain DJO10A)).